We begin with the raw amino-acid sequence, 171 residues long: MVKLNSNPGEKGAKPPSVEDGFQTVPLITPLEVNHLQLAAPEKVIVKTRTEYQPEQRNKGKFRVPKIAEFTVTILVSLALAFLACIVFLVVYKAFTYDHSCPEGFVYKHKRCIPASLDAYYSSQDPSSRSRFYTVISHYSVAKQSTARAIGPWLSAAAVIHEPKPPKTQGH.

The disordered stretch occupies residues 1–21 (MVKLNSNPGEKGAKPPSVEDG). Residues 1–71 (MVKLNSNPGE…FRVPKIAEFT (71 aa)) lie on the Cytoplasmic side of the membrane. A helical; Signal-anchor for type II membrane protein transmembrane segment spans residues 72 to 92 (VTILVSLALAFLACIVFLVVY). At 93 to 171 (KAFTYDHSCP…EPKPPKTQGH (79 aa)) the chain is on the lumenal side.

Belongs to the NSG family. Specifically expressed in neural and neuroendocrine tissues. Pituitary and less in adrenal gland and testis. Expressed in the hippocampus throughout development. Remains enriched in layer V cortical neurons during development. At P0, broadly expressed in the neocortex. Is down-regulated overall at P8 and P14, but remains relatively enriched in layer V. At P0 is lower expressed in the cerebellum. Expression remains low throughout development, and is undetectable by adulthood.

The protein localises to the membrane. The protein resides in the golgi apparatus. It is found in the trans-Golgi network membrane. It localises to the cell projection. Its subcellular location is the dendrite. The protein localises to the endosome membrane. The protein resides in the early endosome membrane. It is found in the late endosome membrane. It localises to the lysosome lumen. Its subcellular location is the cytoplasmic vesicle membrane. The protein localises to the golgi stack membrane. The protein resides in the endosome. It is found in the multivesicular body membrane. This Mus musculus (Mouse) protein is Neuronal vesicle trafficking-associated protein 2.